The sequence spans 449 residues: Glutamate--tRNA ligase 1 (449 aa).

The 'HIGH' region signature appears at 11–21 (PSPTGSLHVGN). The short motif at 242–246 (PLSKR) is the 'KMSKS' region element. ATP is bound at residue K245.

The protein belongs to the class-I aminoacyl-tRNA synthetase family. Glutamate--tRNA ligase type 1 subfamily. Monomer.

The protein resides in the cytoplasm. It catalyses the reaction tRNA(Glu) + L-glutamate + ATP = L-glutamyl-tRNA(Glu) + AMP + diphosphate. Functionally, catalyzes the attachment of glutamate to tRNA(Glu) in a two-step reaction: glutamate is first activated by ATP to form Glu-AMP and then transferred to the acceptor end of tRNA(Glu). The protein is Glutamate--tRNA ligase 1 of Parvibaculum lavamentivorans (strain DS-1 / DSM 13023 / NCIMB 13966).